The chain runs to 357 residues: DNA integrity scanning protein DisA (357 aa).

The DAC domain maps to Asp9–Ser147. Residues Gly76, Leu94, and Thr107 to Thr111 contribute to the ATP site.

It belongs to the DisA family. Homooctamer. Mg(2+) is required as a cofactor.

It carries out the reaction 2 ATP = 3',3'-c-di-AMP + 2 diphosphate. In terms of biological role, participates in a DNA-damage check-point that is active prior to asymmetric division when DNA is damaged. DisA forms globular foci that rapidly scan along the chromosomes during sporulation, searching for lesions. When a lesion is present, DisA pauses at the lesion site. This triggers a cellular response that culminates in a temporary block in sporulation initiation. Its function is as follows. Also has diadenylate cyclase activity, catalyzing the condensation of 2 ATP molecules into cyclic di-AMP (c-di-AMP). c-di-AMP acts as a signaling molecule that couples DNA integrity with progression of sporulation. The rise in c-di-AMP level generated by DisA while scanning the chromosome, operates as a positive signal that advances sporulation; upon encountering a lesion, the DisA focus arrests at the damaged site and halts c-di-AMP synthesis. This chain is DNA integrity scanning protein DisA, found in Clostridium acetobutylicum (strain ATCC 824 / DSM 792 / JCM 1419 / IAM 19013 / LMG 5710 / NBRC 13948 / NRRL B-527 / VKM B-1787 / 2291 / W).